Consider the following 156-residue polypeptide: Large ribosomal subunit protein uL15 (156 aa).

The disordered stretch occupies residues 25 to 49 (RGIGCGKGKTSGRGHKGQKARSGTS). Residues 34-43 (TSGRGHKGQK) show a composition bias toward basic residues.

Belongs to the universal ribosomal protein uL15 family. In terms of assembly, part of the 50S ribosomal subunit.

Binds to the 23S rRNA. The chain is Large ribosomal subunit protein uL15 from Wolbachia sp. subsp. Brugia malayi (strain TRS).